The chain runs to 227 residues: Orotidine 5'-phosphate decarboxylase (227 aa).

Substrate contacts are provided by residues aspartate 8, lysine 30, aspartate 59–threonine 68, threonine 118, arginine 178, glutamine 187, glycine 207, and arginine 208. Lysine 61 serves as the catalytic Proton donor.

This sequence belongs to the OMP decarboxylase family. Type 1 subfamily. As to quaternary structure, homodimer.

It catalyses the reaction orotidine 5'-phosphate + H(+) = UMP + CO2. It functions in the pathway pyrimidine metabolism; UMP biosynthesis via de novo pathway; UMP from orotate: step 2/2. Functionally, catalyzes the decarboxylation of orotidine 5'-monophosphate (OMP) to uridine 5'-monophosphate (UMP). The sequence is that of Orotidine 5'-phosphate decarboxylase from Helicobacter pylori (strain P12).